We begin with the raw amino-acid sequence, 273 residues long: 3-methyl-2-oxobutanoate hydroxymethyltransferase (273 aa).

Residues Asp-49 and Asp-88 each contribute to the Mg(2+) site. 3-methyl-2-oxobutanoate is bound by residues 49-50, Asp-88, and Lys-118; that span reads DS. Glu-120 serves as a coordination point for Mg(2+). Glu-187 serves as the catalytic Proton acceptor.

It belongs to the PanB family. Homodecamer; pentamer of dimers. The cofactor is Mg(2+).

The protein resides in the cytoplasm. It catalyses the reaction 3-methyl-2-oxobutanoate + (6R)-5,10-methylene-5,6,7,8-tetrahydrofolate + H2O = 2-dehydropantoate + (6S)-5,6,7,8-tetrahydrofolate. It functions in the pathway cofactor biosynthesis; (R)-pantothenate biosynthesis; (R)-pantoate from 3-methyl-2-oxobutanoate: step 1/2. Its function is as follows. Catalyzes the reversible reaction in which hydroxymethyl group from 5,10-methylenetetrahydrofolate is transferred onto alpha-ketoisovalerate to form ketopantoate. The polypeptide is 3-methyl-2-oxobutanoate hydroxymethyltransferase (Rhizobium etli (strain ATCC 51251 / DSM 11541 / JCM 21823 / NBRC 15573 / CFN 42)).